A 73-amino-acid chain; its full sequence is Long neurotoxin 3 (73 aa).

5 disulfide bridges follow: cysteine 3/cysteine 21, cysteine 14/cysteine 42, cysteine 27/cysteine 31, cysteine 46/cysteine 57, and cysteine 58/cysteine 63.

Belongs to the three-finger toxin family. Long-chain subfamily. Type II alpha-neurotoxin sub-subfamily. As to expression, expressed by the venom gland.

The protein resides in the secreted. Functionally, binds with high affinity to muscular (alpha-1/CHRNA1) and neuronal (alpha-7/CHRNA7) nicotinic acetylcholine receptor (nAChR) and inhibits acetylcholine from binding to the receptor, thereby impairing neuromuscular and neuronal transmission. This is Long neurotoxin 3 from Ophiophagus hannah (King cobra).